Here is a 426-residue protein sequence, read N- to C-terminus: Cephalotocin receptor 2 (426 aa).

The Extracellular portion of the chain corresponds to 1–51; that stretch reads MYQAMEVESTSPSGFFLDFYTQSTIPTTDFLNNTNSSHPIRDEKLVKIEIA. Residues Asn32 and Asn35 are each glycosylated (N-linked (GlcNAc...) asparagine). The chain crosses the membrane as a helical span at residues 52-72; it reads VLGTCFTLAIINNLCVLLVLL. At 73–84 the chain is on the cytoplasmic side; the sequence is WRRKKVRRMQMF. A helical membrane pass occupies residues 85 to 105; the sequence is ILHLSIADLIVAFFNILPQLI. The Extracellular segment spans residues 106–120; the sequence is WDITFRFMAGDAMCR. Cys119 and Cys198 are oxidised to a cystine. Residues 121–141 form a helical membrane-spanning segment; sequence FIKYAQMFSLYLSTYILIMTA. The Cytoplasmic segment spans residues 142–165; the sequence is VDRYRAICHPLSNQTWTPCMVYCK. The chain crosses the membrane as a helical span at residues 166–186; it reads IFIAYAIATIFSIPQAILFQM. Topologically, residues 187-208 are extracellular; sequence QEVNEGSGIYDCWVHFEPAWVL. Residues 209–229 form a helical membrane-spanning segment; that stretch reads TAYALYIFFALYLIPILILFF. Over 230–288 the chain is Cytoplasmic; that stretch reads TYGSICYTIWAKYRHAIKTKKDANTRYPQRRKKKGVILRTHSVHGFSKAKLNSVKLTFA. Residues 289–309 form a helical membrane-spanning segment; it reads VIVTYIICWSPFFVSQIWWLF. Residues 310–319 are Extracellular-facing; sequence DETVVGNAGV. Residues 320–340 form a helical membrane-spanning segment; that stretch reads VVILLMACLNSCTNPWIYLIF. At 341-426 the chain is on the cytoplasmic side; that stretch reads NRNYISNVLP…DQFIYSDKTT (86 aa). The tract at residues 373–426 is disordered; the sequence is GSVRRDSRKTSDPKRISESRRISDARRISGKTQKNNSSSPRKTSDQFIYSDKTT. Basic and acidic residues predominate over residues 375-399; that stretch reads VRRDSRKTSDPKRISESRRISDARR. Over residues 402–426 the composition is skewed to polar residues; it reads GKTQKNNSSSPRKTSDQFIYSDKTT.

The protein belongs to the G-protein coupled receptor 1 family. Vasopressin/oxytocin receptor subfamily. In terms of tissue distribution, present in various peripheral tissues with highest expression in branchia and vas deferens. Very low expression detected in nervous system.

It localises to the cell membrane. Functionally, acts as a receptor for cephalotocin. The sequence is that of Cephalotocin receptor 2 from Octopus vulgaris (Common octopus).